The following is a 783-amino-acid chain: E3 UFM1-protein ligase 1 homolog (783 aa).

The disordered stretch occupies residues 404–482 (SNSSANFDAD…AGSSRKSVKP (79 aa)). Residues 445–457 (KSTKKHQRGRAAA) show a composition bias toward basic residues.

It belongs to the UFL1 family.

In terms of biological role, E3 UFM1-protein ligase that mediates ufmylation of target proteins. This chain is E3 UFM1-protein ligase 1 homolog, found in Drosophila mojavensis (Fruit fly).